The primary structure comprises 129 residues: Small ribosomal subunit protein uS11 (129 aa).

The protein belongs to the universal ribosomal protein uS11 family. Part of the 30S ribosomal subunit. Interacts with proteins S7 and S18. Binds to IF-3.

Located on the platform of the 30S subunit, it bridges several disparate RNA helices of the 16S rRNA. Forms part of the Shine-Dalgarno cleft in the 70S ribosome. This Agrobacterium fabrum (strain C58 / ATCC 33970) (Agrobacterium tumefaciens (strain C58)) protein is Small ribosomal subunit protein uS11.